The primary structure comprises 309 residues: Probable lipid kinase YegS-like (309 aa).

Positions 1 to 134 (MAPSHWRLIL…IDLLRIDADH (134 aa)) constitute a DAGKc domain. ATP is bound by residues Thr39, 65–71 (GDGTLSE), and Thr96. Mg(2+) contacts are provided by Leu219, Asp222, and Leu224. The Proton acceptor role is filled by Glu280.

Belongs to the diacylglycerol/lipid kinase family. YegS lipid kinase subfamily. Mg(2+) is required as a cofactor. Requires Ca(2+) as cofactor.

The protein localises to the cytoplasm. Its function is as follows. Probably phosphorylates lipids; the in vivo substrate is unknown. This chain is Probable lipid kinase YegS-like, found in Xanthomonas campestris pv. campestris (strain 8004).